Here is a 396-residue protein sequence, read N- to C-terminus: Acetate kinase (396 aa).

Residue Asn-8 coordinates Mg(2+). Lys-15 lines the ATP pocket. Substrate is bound at residue Arg-89. Asp-146 acts as the Proton donor/acceptor in catalysis. ATP contacts are provided by residues His-206–Gly-210, Asp-283–Arg-285, and Gly-331–Asn-335. Glu-383 contributes to the Mg(2+) binding site.

It belongs to the acetokinase family. Homodimer. Mg(2+) is required as a cofactor. The cofactor is Mn(2+).

It localises to the cytoplasm. It carries out the reaction acetate + ATP = acetyl phosphate + ADP. It participates in metabolic intermediate biosynthesis; acetyl-CoA biosynthesis; acetyl-CoA from acetate: step 1/2. In terms of biological role, catalyzes the formation of acetyl phosphate from acetate and ATP. Can also catalyze the reverse reaction. This is Acetate kinase from Streptococcus pneumoniae serotype 2 (strain D39 / NCTC 7466).